The chain runs to 246 residues: tRNA pseudouridine synthase A (246 aa).

Asp52 (nucleophile) is an active-site residue. Position 111 (Tyr111) interacts with substrate.

The protein belongs to the tRNA pseudouridine synthase TruA family. As to quaternary structure, homodimer.

It catalyses the reaction uridine(38/39/40) in tRNA = pseudouridine(38/39/40) in tRNA. Formation of pseudouridine at positions 38, 39 and 40 in the anticodon stem and loop of transfer RNAs. The chain is tRNA pseudouridine synthase A from Borreliella afzelii (strain PKo) (Borrelia afzelii).